A 160-amino-acid chain; its full sequence is Nucleotide-binding protein BP2916 (160 aa).

The protein belongs to the YajQ family.

Its function is as follows. Nucleotide-binding protein. This chain is Nucleotide-binding protein BP2916, found in Bordetella pertussis (strain Tohama I / ATCC BAA-589 / NCTC 13251).